The chain runs to 152 residues: UPF0178 protein SAR0734 (152 aa).

Belongs to the UPF0178 family.

The polypeptide is UPF0178 protein SAR0734 (Staphylococcus aureus (strain MRSA252)).